Reading from the N-terminus, the 153-residue chain is Regulatory protein RecX (153 aa).

It belongs to the RecX family.

Its subcellular location is the cytoplasm. In terms of biological role, modulates RecA activity. The chain is Regulatory protein RecX from Neisseria gonorrhoeae (strain ATCC 700825 / FA 1090).